Reading from the N-terminus, the 246-residue chain is DNA repair protein RecO (246 aa).

Belongs to the RecO family.

Involved in DNA repair and RecF pathway recombination. This chain is DNA repair protein RecO, found in Methylorubrum populi (strain ATCC BAA-705 / NCIMB 13946 / BJ001) (Methylobacterium populi).